A 369-amino-acid chain; its full sequence is 4-hydroxy-3-methylbut-2-en-1-yl diphosphate synthase (flavodoxin) (369 aa).

Residues Cys-270, Cys-273, Cys-305, and Glu-312 each contribute to the [4Fe-4S] cluster site.

It belongs to the IspG family. [4Fe-4S] cluster serves as cofactor.

The enzyme catalyses (2E)-4-hydroxy-3-methylbut-2-enyl diphosphate + oxidized [flavodoxin] + H2O + 2 H(+) = 2-C-methyl-D-erythritol 2,4-cyclic diphosphate + reduced [flavodoxin]. It functions in the pathway isoprenoid biosynthesis; isopentenyl diphosphate biosynthesis via DXP pathway; isopentenyl diphosphate from 1-deoxy-D-xylulose 5-phosphate: step 5/6. Converts 2C-methyl-D-erythritol 2,4-cyclodiphosphate (ME-2,4cPP) into 1-hydroxy-2-methyl-2-(E)-butenyl 4-diphosphate. This Pseudomonas savastanoi pv. phaseolicola (strain 1448A / Race 6) (Pseudomonas syringae pv. phaseolicola (strain 1448A / Race 6)) protein is 4-hydroxy-3-methylbut-2-en-1-yl diphosphate synthase (flavodoxin).